A 167-amino-acid chain; its full sequence is Pathogenesis-related protein PR-1 type (167 aa).

Positions 1–29 (MAHNHWCNLFSVALVCVVALVMVQYSVAQ) are cleaved as a signal peptide. The SCP domain occupies 36–155 (VDAHNAARSA…NGAWFITCNY (120 aa)). Disulfide bonds link C72–C144, C117–C123, and C139–C153.

It belongs to the CRISP family.

Its function is as follows. Probably involved in the defense reaction of plants against pathogens. The sequence is that of Pathogenesis-related protein PR-1 type from Sambucus nigra (European elder).